A 40-amino-acid chain; its full sequence is Large ribosomal subunit protein bL36B (40 aa).

This sequence belongs to the bacterial ribosomal protein bL36 family.

The polypeptide is Large ribosomal subunit protein bL36B (Streptomyces coelicolor (strain ATCC BAA-471 / A3(2) / M145)).